Consider the following 322-residue polypeptide: ATP-dependent 6-phosphofructokinase 1 (322 aa).

Position 11 (Gly11) interacts with ATP. Residue 21-25 (RAVVR) coordinates ADP. Residues 72–73 (RS) and 102–105 (GDGT) each bind ATP. Position 103 (Asp103) interacts with Mg(2+). Residue 126–128 (TID) coordinates substrate. Asp128 (proton acceptor) is an active-site residue. Arg155 is a binding site for ADP. Substrate is bound by residues Arg163 and 170–172 (MGR). ADP-binding positions include 186 to 188 (GAE), Arg212, and 214 to 216 (KKS). Substrate-binding positions include Glu223, Arg246, and 252-255 (HIQR).

This sequence belongs to the phosphofructokinase type A (PFKA) family. ATP-dependent PFK group I subfamily. Prokaryotic clade 'B1' sub-subfamily. In terms of assembly, homotetramer. Mg(2+) is required as a cofactor.

The protein resides in the cytoplasm. The catalysed reaction is beta-D-fructose 6-phosphate + ATP = beta-D-fructose 1,6-bisphosphate + ADP + H(+). The protein operates within carbohydrate degradation; glycolysis; D-glyceraldehyde 3-phosphate and glycerone phosphate from D-glucose: step 3/4. With respect to regulation, allosterically activated by ADP and other diphosphonucleosides. Allosterically inhibited by phosphoenolpyruvate which induces the dissociation of the active tetramer into an inactive two-subunit forms. In terms of biological role, catalyzes the phosphorylation of D-fructose 6-phosphate to fructose 1,6-bisphosphate by ATP, the first committing step of glycolysis. The polypeptide is ATP-dependent 6-phosphofructokinase 1 (Thermus thermophilus (strain ATCC 27634 / DSM 579 / HB8)).